Here is a 446-residue protein sequence, read N- to C-terminus: Glycerol-3-phosphate acyltransferase 3 (446 aa).

Transmembrane regions (helical) follow at residues 25–45 (LPSA…VLVK), 142–162 (LRLT…LLPL), and 164–184 (FTLA…VGQL). An HXXXXD motif motif is present at residues 232-237 (HTSPID). The chain crosses the membrane as a helical span at residues 352 to 372 (IVSYLLRIMTSWAIVCHVWYM). Residues 418–446 (FKEEQQKNYSKMLVRNGSQGNLPAGTESD) form a disordered region.

The protein belongs to the 1-acyl-sn-glycerol-3-phosphate acyltransferase family.

It is found in the endoplasmic reticulum membrane. The catalysed reaction is sn-glycerol 3-phosphate + an acyl-CoA = a 1-acyl-sn-glycero-3-phosphate + CoA. It carries out the reaction a 1-acyl-sn-glycero-3-phosphate + an acyl-CoA = a 1,2-diacyl-sn-glycero-3-phosphate + CoA. It catalyses the reaction dodecanoyl-CoA + sn-glycerol 3-phosphate = 1-dodecanoyl-sn-glycerol 3-phosphate + CoA. The enzyme catalyses sn-glycerol 3-phosphate + hexadecanoyl-CoA = 1-hexadecanoyl-sn-glycero-3-phosphate + CoA. The catalysed reaction is sn-glycerol 3-phosphate + (9Z)-octadecenoyl-CoA = 1-(9Z-octadecenoyl)-sn-glycero-3-phosphate + CoA. It carries out the reaction (9Z,12Z)-octadecadienoyl-CoA + sn-glycerol 3-phosphate = 1-(9Z,12Z)-octadecadienoyl-sn-glycero-3-phosphate + CoA. It catalyses the reaction 1-tetradecanoyl-sn-glycerol 3-phosphate + (9Z)-octadecenoyl-CoA = 1-tetradecanoyl-2-(9Z)-octadecenoyl-sn-glycero-3-phosphate + CoA. The enzyme catalyses 1-hexadecanoyl-sn-glycero-3-phosphate + (9Z)-octadecenoyl-CoA = 1-hexadecanoyl-2-(9Z-octadecenoyl)-sn-glycero-3-phosphate + CoA. The catalysed reaction is 1-(9Z-octadecenoyl)-sn-glycero-3-phosphate + (9Z)-octadecenoyl-CoA = 1,2-di-(9Z-octadecenoyl)-sn-glycero-3-phosphate + CoA. It carries out the reaction 1-(6Z,9Z,12Z-octadecatrienoyl)-sn-glycero-3-phosphate + (9Z)-octadecenoyl-CoA = (6Z,9Z,12Z)-octadecatrienoyl-2-(9Z)-octadecenoyl-sn-glycero-3-phosphate + CoA. It catalyses the reaction 1-(9Z,12Z,15Z)-octadecatrienoyl-sn-glycero-3-phosphate + (9Z)-octadecenoyl-CoA = 1-(9Z,12Z,15Z)-octadecatrienoyl-2-(9Z)-octadecenoyl-sn-glycero-3-phosphate + CoA. The enzyme catalyses 1-(9Z-octadecenoyl)-sn-glycero-3-phosphate + tetradecanoyl-CoA = 1-(9Z)-octadecenoyl-2-tetradecanoyl-sn-glycero-3-phosphate + CoA. The catalysed reaction is 1-(9Z-octadecenoyl)-sn-glycero-3-phosphate + hexadecanoyl-CoA = 1-(9Z)-octadecenoyl-2-hexadecanoyl-sn-glycero-3-phosphate + CoA. It carries out the reaction 1-(9Z-octadecenoyl)-sn-glycero-3-phosphate + octadecanoyl-CoA = 1-(9Z-octadecenoyl)-2-octadecanoyl-sn-glycero-3-phosphate + CoA. It catalyses the reaction 1-(9Z-octadecenoyl)-sn-glycero-3-phosphate + (9Z,12Z)-octadecadienoyl-CoA = 1-(9Z)-octadecenoyl-2-(9Z,12Z)-octadecadienoyl-sn-glycero-3-phosphate + CoA. The enzyme catalyses 1-(5Z,8Z,11Z,14Z-eicosatetraenoyl)-sn-glycero-3-phosphate + (9Z)-octadecenoyl-CoA = 1-(5Z,8Z,11Z,14Z)-eicosatetraenoyl-2-(9Z)-octadecenoyl-sn-glycero-3-phosphate + CoA. It functions in the pathway glycerolipid metabolism; triacylglycerol biosynthesis. Its pathway is phospholipid metabolism; CDP-diacylglycerol biosynthesis; CDP-diacylglycerol from sn-glycerol 3-phosphate: step 1/3. In terms of biological role, converts glycerol-3-phosphate to 1-acyl-sn-glycerol-3-phosphate (lysophosphatidic acid or LPA) by incorporating an acyl moiety at the sn-1 position of the glycerol backbone. Also converts LPA into 1,2-diacyl-sn-glycerol-3-phosphate (phosphatidic acid or PA) by incorporating an acyl moiety at the sn-2 position of the glycerol backbone. Protects cells against lipotoxicity. The chain is Glycerol-3-phosphate acyltransferase 3 from Gallus gallus (Chicken).